The chain runs to 245 residues: 1-(5-phosphoribosyl)-5-[(5-phosphoribosylamino)methylideneamino] imidazole-4-carboxamide isomerase (245 aa).

Catalysis depends on D8, which acts as the Proton acceptor. D130 serves as the catalytic Proton donor.

Belongs to the HisA/HisF family.

It localises to the cytoplasm. The catalysed reaction is 1-(5-phospho-beta-D-ribosyl)-5-[(5-phospho-beta-D-ribosylamino)methylideneamino]imidazole-4-carboxamide = 5-[(5-phospho-1-deoxy-D-ribulos-1-ylimino)methylamino]-1-(5-phospho-beta-D-ribosyl)imidazole-4-carboxamide. The protein operates within amino-acid biosynthesis; L-histidine biosynthesis; L-histidine from 5-phospho-alpha-D-ribose 1-diphosphate: step 4/9. This chain is 1-(5-phosphoribosyl)-5-[(5-phosphoribosylamino)methylideneamino] imidazole-4-carboxamide isomerase, found in Teredinibacter turnerae (strain ATCC 39867 / T7901).